We begin with the raw amino-acid sequence, 57 residues long: Large ribosomal subunit protein bL32 (57 aa).

This sequence belongs to the bacterial ribosomal protein bL32 family.

In Mycolicibacterium gilvum (strain PYR-GCK) (Mycobacterium gilvum (strain PYR-GCK)), this protein is Large ribosomal subunit protein bL32.